The chain runs to 423 residues: Putative UPF0496 protein 5 (423 aa).

The span at 1 to 14 (MGNRHGIMRPRRLA) shows a compositional bias: basic residues. Residues 1-37 (MGNRHGIMRPRRLASGRSAAEEEEDGEGEPGSYEAAC) form a disordered region. 2 helical membrane-spanning segments follow: residues 224-244 (IVFLTSFAALLVCSVVAAAIA) and 247-267 (PVAAALAAAASMPVGSAGKWM).

It belongs to the UPF0496 family.

The protein resides in the membrane. The sequence is that of Putative UPF0496 protein 5 from Oryza sativa subsp. japonica (Rice).